We begin with the raw amino-acid sequence, 285 residues long: MKKFCIIANRDKDENLTITQTMLEFLEANGKTVYVTEESCLEGSYTDVSGIPKDVECAIVLGGDGTILQAAHDLLQLDIPILGVNLGTLGFLAEIETLTMKQAFSKLFLNQYNIESRMMIDATVFKEGQSLSSHKVSAINDVVITRSGFSRIIGVSIFINGEVVQNYRGDGVIISTPTGSTGYNLSAGGPIVTPKAEMIMITPICPHSLNARSIIVTSDDTVEIQIRESKKTQEEEAIVTVDGSFSMELQANDRILIKKAKERVKLVRLEGHSFFHLLRTKFGDK.

Asp64 (proton acceptor) is an active-site residue. NAD(+) contacts are provided by residues 64–65, 140–141, Arg151, Arg168, Asp170, and 181–186; these read DG, ND, and TGYNLS.

The protein belongs to the NAD kinase family. It depends on a divalent metal cation as a cofactor.

It is found in the cytoplasm. The catalysed reaction is NAD(+) + ATP = ADP + NADP(+) + H(+). Its function is as follows. Involved in the regulation of the intracellular balance of NAD and NADP, and is a key enzyme in the biosynthesis of NADP. Catalyzes specifically the phosphorylation on 2'-hydroxyl of the adenosine moiety of NAD to yield NADP. The sequence is that of NAD kinase from Lachnoclostridium phytofermentans (strain ATCC 700394 / DSM 18823 / ISDg) (Clostridium phytofermentans).